The following is a 329-amino-acid chain: Ornithine carbamoyltransferase (329 aa).

Residues 51–54 (STRT), Q78, R102, and 129–132 (HPVQ) each bind carbamoyl phosphate. L-ornithine contacts are provided by residues N174, D238, and 242 to 243 (SM). Residues 278-279 (CL) and R306 contribute to the carbamoyl phosphate site.

It belongs to the aspartate/ornithine carbamoyltransferase superfamily. OTCase family.

The protein resides in the cytoplasm. It carries out the reaction carbamoyl phosphate + L-ornithine = L-citrulline + phosphate + H(+). It functions in the pathway amino-acid biosynthesis; L-arginine biosynthesis; L-arginine from L-ornithine and carbamoyl phosphate: step 1/3. Functionally, reversibly catalyzes the transfer of the carbamoyl group from carbamoyl phosphate (CP) to the N(epsilon) atom of ornithine (ORN) to produce L-citrulline. In Helicobacter hepaticus (strain ATCC 51449 / 3B1), this protein is Ornithine carbamoyltransferase.